We begin with the raw amino-acid sequence, 678 residues long: Pescadillo homolog (678 aa).

Residues proline 265 to threonine 289 are disordered. Residues threonine 269–threonine 289 are compositionally biased toward low complexity. The BRCT domain occupies aspartate 352 to isoleucine 442. 2 disordered regions span residues threonine 485–lysine 601 and alanine 626–lysine 678. Residues serine 505–glutamate 518 are compositionally biased toward acidic residues. Residues histidine 519 to glutamate 531 are compositionally biased toward basic and acidic residues. Positions valine 541 to serine 574 are enriched in acidic residues. The stretch at valine 581–glutamate 640 forms a coiled coil. 2 stretches are compositionally biased toward basic and acidic residues: residues lysine 585–lysine 601 and leucine 633–lysine 643. A compositionally biased stretch (low complexity) spans valine 649–lysine 678.

The protein belongs to the pescadillo family.

It localises to the nucleus. It is found in the nucleolus. The protein localises to the nucleoplasm. Functionally, required for maturation of ribosomal RNAs and formation of the large ribosomal subunit. The sequence is that of Pescadillo homolog from Dictyostelium discoideum (Social amoeba).